A 120-amino-acid chain; its full sequence is Large ribosomal subunit protein uL22 (120 aa).

It belongs to the universal ribosomal protein uL22 family. Part of the 50S ribosomal subunit.

In terms of biological role, this protein binds specifically to 23S rRNA; its binding is stimulated by other ribosomal proteins, e.g. L4, L17, and L20. It is important during the early stages of 50S assembly. It makes multiple contacts with different domains of the 23S rRNA in the assembled 50S subunit and ribosome. Functionally, the globular domain of the protein is located near the polypeptide exit tunnel on the outside of the subunit, while an extended beta-hairpin is found that lines the wall of the exit tunnel in the center of the 70S ribosome. This is Large ribosomal subunit protein uL22 from Rippkaea orientalis (strain PCC 8801 / RF-1) (Cyanothece sp. (strain PCC 8801)).